The primary structure comprises 244 residues: tRNA (guanine-N(1)-)-methyltransferase (244 aa).

S-adenosyl-L-methionine-binding positions include G112 and 131–136 (LGDFIL). The disordered stretch occupies residues 211-244 (IKRTSDRRPDLLEKWQQEKKPGSREQGSREQGEK).

Belongs to the RNA methyltransferase TrmD family. Homodimer.

It localises to the cytoplasm. It carries out the reaction guanosine(37) in tRNA + S-adenosyl-L-methionine = N(1)-methylguanosine(37) in tRNA + S-adenosyl-L-homocysteine + H(+). Its function is as follows. Specifically methylates guanosine-37 in various tRNAs. The protein is tRNA (guanine-N(1)-)-methyltransferase of Trichormus variabilis (strain ATCC 29413 / PCC 7937) (Anabaena variabilis).